The following is a 515-amino-acid chain: 1-pyrroline-5-carboxylate dehydrogenase 2 (515 aa).

Catalysis depends on residues Glu-286 and Cys-320.

This sequence belongs to the aldehyde dehydrogenase family. RocA subfamily.

It catalyses the reaction L-glutamate 5-semialdehyde + NAD(+) + H2O = L-glutamate + NADH + 2 H(+). The protein operates within amino-acid degradation; L-proline degradation into L-glutamate; L-glutamate from L-proline: step 2/2. In terms of biological role, important for the use of proline as a sole carbon and energy source or a sole nitrogen source. The sequence is that of 1-pyrroline-5-carboxylate dehydrogenase 2 from Bacillus subtilis (strain 168).